We begin with the raw amino-acid sequence, 314 residues long: Malate dehydrogenase (314 aa).

NAD(+) contacts are provided by residues 12-17 (GAGNIG) and Asp36. 2 residues coordinate substrate: Arg85 and Arg91. NAD(+) contacts are provided by residues Asn98 and 121 to 123 (VTN). Substrate is bound by residues Asn123 and Arg154. His178 (proton acceptor) is an active-site residue.

The protein belongs to the LDH/MDH superfamily. MDH type 3 family.

It catalyses the reaction (S)-malate + NAD(+) = oxaloacetate + NADH + H(+). Functionally, catalyzes the reversible oxidation of malate to oxaloacetate. This is Malate dehydrogenase from Wolbachia pipientis subsp. Culex pipiens (strain wPip).